We begin with the raw amino-acid sequence, 191 residues long: Corticoliberin (191 aa).

An N-terminal signal peptide occupies residues 1–24 (MRLPLLVSAGVLLVALLPCPPCRA). Positions 25–148 (LLSRGPVLGA…RQEAPERERR (124 aa)) are excised as a propeptide. The disordered stretch occupies residues 115–153 (PLPRRPLDSPSGPAERGAENALSSRQEAPERERRSEEPP). Over residues 141-151 (EAPERERRSEE) the composition is skewed to basic and acidic residues. At Ile-189 the chain carries Isoleucine amide.

Belongs to the sauvagine/corticotropin-releasing factor/urotensin I family. As to quaternary structure, interacts (via C-terminus) with CRFR1 (via N-terminal extracellular domain). Produced by the hypothalamus.

The protein localises to the secreted. Functionally, hormone regulating the release of corticotropin from pituitary gland. Induces NLRP6 in intestinal epithelial cells, hence may influence gut microbiota profile. The chain is Corticoliberin (CRH) from Sus scrofa (Pig).